Here is a 255-residue protein sequence, read N- to C-terminus: tRNA uridine(34) hydroxylase (255 aa).

The region spanning 125–219 is the Rhodanese domain; the sequence is AAPDTLLIDT…YLEGIPESES (95 aa). Cysteine 179 acts as the Cysteine persulfide intermediate in catalysis.

The protein belongs to the TrhO family.

The enzyme catalyses uridine(34) in tRNA + AH2 + O2 = 5-hydroxyuridine(34) in tRNA + A + H2O. Functionally, catalyzes oxygen-dependent 5-hydroxyuridine (ho5U) modification at position 34 in tRNAs. This is tRNA uridine(34) hydroxylase from Nitrobacter hamburgensis (strain DSM 10229 / NCIMB 13809 / X14).